A 467-amino-acid polypeptide reads, in one-letter code: UDP-N-acetylmuramate--L-alanine ligase (467 aa).

ATP is bound at residue 114-120; that stretch reads GTHGKTT.

Belongs to the MurCDEF family.

Its subcellular location is the cytoplasm. The catalysed reaction is UDP-N-acetyl-alpha-D-muramate + L-alanine + ATP = UDP-N-acetyl-alpha-D-muramoyl-L-alanine + ADP + phosphate + H(+). The protein operates within cell wall biogenesis; peptidoglycan biosynthesis. Its function is as follows. Cell wall formation. The protein is UDP-N-acetylmuramate--L-alanine ligase of Nitrobacter hamburgensis (strain DSM 10229 / NCIMB 13809 / X14).